The primary structure comprises 104 residues: Iron-sulfur cluster assembly protein CyaY (104 aa).

This sequence belongs to the frataxin family.

Its function is as follows. Involved in iron-sulfur (Fe-S) cluster assembly. May act as a regulator of Fe-S biogenesis. This is Iron-sulfur cluster assembly protein CyaY from Rickettsia prowazekii (strain Madrid E).